A 494-amino-acid chain; its full sequence is Guanosine-5'-triphosphate,3'-diphosphate pyrophosphatase (494 aa).

It belongs to the GppA/Ppx family. GppA subfamily.

The catalysed reaction is guanosine 3'-diphosphate 5'-triphosphate + H2O = guanosine 3',5'-bis(diphosphate) + phosphate + H(+). Its pathway is purine metabolism; ppGpp biosynthesis; ppGpp from GTP: step 2/2. Its function is as follows. Catalyzes the conversion of pppGpp to ppGpp. Guanosine pentaphosphate (pppGpp) is a cytoplasmic signaling molecule which together with ppGpp controls the 'stringent response', an adaptive process that allows bacteria to respond to amino acid starvation, resulting in the coordinated regulation of numerous cellular activities. The chain is Guanosine-5'-triphosphate,3'-diphosphate pyrophosphatase from Escherichia fergusonii (strain ATCC 35469 / DSM 13698 / CCUG 18766 / IAM 14443 / JCM 21226 / LMG 7866 / NBRC 102419 / NCTC 12128 / CDC 0568-73).